Consider the following 172-residue polypeptide: Putative phosphoesterase BT9727_1129 (172 aa).

H34 serves as the catalytic Proton donor. 2 consecutive short sequence motifs (HXTX) follow at residues 34–37 (HITL) and 115–118 (HLTI). The active-site Proton acceptor is H115.

The protein belongs to the 2H phosphoesterase superfamily. YjcG family.

This chain is Putative phosphoesterase BT9727_1129, found in Bacillus thuringiensis subsp. konkukian (strain 97-27).